Consider the following 361-residue polypeptide: 3-dehydroquinate synthase (361 aa).

The protein belongs to the archaeal-type DHQ synthase family.

The catalysed reaction is 2-amino-2,3,7-trideoxy-D-lyxo-hept-6-ulosonate + NAD(+) + H2O = 3-dehydroquinate + NH4(+) + NADH + H(+). Functionally, catalyzes the oxidative deamination and cyclization of 2-amino-3,7-dideoxy-D-threo-hept-6-ulosonic acid (ADH) to yield 3-dehydroquinate (DHQ), which is fed into the canonical shikimic pathway of aromatic amino acid biosynthesis. The polypeptide is 3-dehydroquinate synthase (Methanococcus maripaludis (strain DSM 14266 / JCM 13030 / NBRC 101832 / S2 / LL)).